The chain runs to 433 residues: G2/mitotic-specific cyclin-B1 (433 aa).

Positions 19 to 47 (INMAGAKRVPTAPAATSKPGLRPRTALGD) are disordered. Lys-73 carries the N6-acetyllysine modification. The disordered stretch occupies residues 93–116 (PVSEPVPEPEPEPEPEPVKEEKLS). Phosphoserine; by CDK1 is present on Ser-126. At Ser-128 the chain carries Phosphoserine. Ser-133 is modified (phosphoserine; by PLK1). Phosphoserine is present on Ser-147. 2 interaction with CDK2 regions span residues 169 to 177 (EYVKDIYAY) and 258 to 261 (YEEM). The residue at position 321 (Thr-321) is a Phosphothreonine.

The protein belongs to the cyclin family. Cyclin AB subfamily. As to quaternary structure, interacts with the CDC2 protein kinase to form a serine/threonine kinase holoenzyme complex also known as maturation promoting factor (MPF). The cyclin subunit imparts substrate specificity to the complex. Binds HEI10. Interacts with catalytically active RALBP1 and CDC2 during mitosis to form an endocytotic complex during interphase. Interacts with CCNF; interaction is required for nuclear localization. Interacts with CDK5RAP3. Interacts with RFPL4A and UBE2A. Interacts with INCA1. Ubiquitinated by the SCF(NIPA) complex during interphase, leading to its destruction. Deubiquitinated by USP22 during G2/M phase. Post-translationally, phosphorylated by PLK1 at Ser-133 on centrosomes during prophase: phosphorylation by PLK1 does not cause nuclear import. Phosphorylation at Ser-147 was also reported to be mediated by PLK1 but Ser-133 seems to be the primary phosphorylation site.

The protein resides in the cytoplasm. Its subcellular location is the nucleus. The protein localises to the cytoskeleton. It is found in the microtubule organizing center. It localises to the centrosome. Essential for the control of the cell cycle at the G2/M (mitosis) transition. In Homo sapiens (Human), this protein is G2/mitotic-specific cyclin-B1 (CCNB1).